The following is a 332-amino-acid chain: Ribosomal RNA small subunit methyltransferase C (332 aa).

This sequence belongs to the methyltransferase superfamily. RsmC family. As to quaternary structure, monomer.

The protein resides in the cytoplasm. It carries out the reaction guanosine(1207) in 16S rRNA + S-adenosyl-L-methionine = N(2)-methylguanosine(1207) in 16S rRNA + S-adenosyl-L-homocysteine + H(+). Functionally, specifically methylates the guanine in position 1207 of 16S rRNA in the 30S particle. The polypeptide is Ribosomal RNA small subunit methyltransferase C (Pseudomonas putida (strain ATCC 47054 / DSM 6125 / CFBP 8728 / NCIMB 11950 / KT2440)).